The following is a 447-amino-acid chain: NADH peroxidase (447 aa).

FAD contacts are provided by residues 7–11, E32, C42, 110–113, and R132; these read GSSHG and SPGA. H10 acts as the Proton acceptor in catalysis. Residue C42 is the Redox-active of the active site. Cysteine sulfenic acid (-SOH) is present on C42. NAD(+) contacts are provided by I160, D179, Y188, and G243. D281 lines the FAD pocket. An NAD(+)-binding site is contributed by A297. A299 is an FAD binding site. Position 328 (G328) interacts with NAD(+).

This sequence belongs to the class-III pyridine nucleotide-disulfide oxidoreductase family. Homotetramer. FAD serves as cofactor.

It catalyses the reaction H2O2 + NADH + H(+) = NAD(+) + 2 H2O. Functionally, peroxidase whose active site is a redox-active cysteine-sulfenic acid. The chain is NADH peroxidase (npr) from Enterococcus faecalis (strain ATCC 700802 / V583).